The following is a 434-amino-acid chain: F-box/LRR-repeat protein 21 (434 aa).

An F-box domain is found at leucine 39–phenylalanine 85. LRR repeat units follow at residues aspartate 187–serine 213, cysteine 214–tyrosine 239, leucine 242–valine 265, glycine 322–alanine 347, glycine 349–glutamate 374, and cysteine 375–glutamate 400.

As to quaternary structure, part of the SCF (SKP1-CUL1-F-box) E3 ubiquitin-protein ligase complex SCF(FBXL21) composed of CUL1, SKP1, RBX1 and FBXL21. Interacts with CRY1 and CRY2.

It is found in the cytoplasm. It localises to the cytosol. Its subcellular location is the nucleus. It participates in protein modification; protein ubiquitination. In terms of biological role, substrate-recognition component of the SCF(FBXL21) E3 ubiquitin ligase complex involved in circadian rhythm function. Plays a key role in the maintenance of both the speed and the robustness of the circadian clock oscillation. The SCF(FBXL21) complex mainly acts in the cytosol and mediates ubiquitination of CRY proteins (CRY1 and CRY2), leading to CRY proteins stabilization. The SCF(FBXL21) complex counteracts the activity of the SCF(FBXL3) complex and protects CRY proteins from degradation. Involved in the hypothalamic suprachiasmatic nucleus (SCN) clock regulating temporal organization of the daily activities. The polypeptide is F-box/LRR-repeat protein 21 (FBXL21) (Bos taurus (Bovine)).